Consider the following 477-residue polypeptide: Glycogen synthase (477 aa).

Position 15 (K15) interacts with ADP-alpha-D-glucose.

Belongs to the glycosyltransferase 1 family. Bacterial/plant glycogen synthase subfamily.

It catalyses the reaction [(1-&gt;4)-alpha-D-glucosyl](n) + ADP-alpha-D-glucose = [(1-&gt;4)-alpha-D-glucosyl](n+1) + ADP + H(+). The protein operates within glycan biosynthesis; glycogen biosynthesis. In terms of biological role, synthesizes alpha-1,4-glucan chains using ADP-glucose. The chain is Glycogen synthase from Streptococcus pneumoniae serotype 19F (strain G54).